Reading from the N-terminus, the 191-residue chain is Large ribosomal subunit protein uL6A (191 aa).

Belongs to the universal ribosomal protein uL6 family. Component of the large ribosomal subunit (LSU). Mature yeast ribosomes consist of a small (40S) and a large (60S) subunit. The 40S small subunit contains 1 molecule of ribosomal RNA (18S rRNA) and 33 different proteins (encoded by 57 genes). The large 60S subunit contains 3 rRNA molecules (25S, 5.8S and 5S rRNA) and 46 different proteins (encoded by 81 genes). uL6 lines the binding pocket for eukaryotic elongation factor 2 (eEF2).

The protein resides in the cytoplasm. Component of the ribosome, a large ribonucleoprotein complex responsible for the synthesis of proteins in the cell. The small ribosomal subunit (SSU) binds messenger RNAs (mRNAs) and translates the encoded message by selecting cognate aminoacyl-transfer RNA (tRNA) molecules. The large subunit (LSU) contains the ribosomal catalytic site termed the peptidyl transferase center (PTC), which catalyzes the formation of peptide bonds, thereby polymerizing the amino acids delivered by tRNAs into a polypeptide chain. The nascent polypeptides leave the ribosome through a tunnel in the LSU and interact with protein factors that function in enzymatic processing, targeting, and the membrane insertion of nascent chains at the exit of the ribosomal tunnel. The protein is Large ribosomal subunit protein uL6A of Saccharomyces cerevisiae (strain ATCC 204508 / S288c) (Baker's yeast).